Consider the following 266-residue polypeptide: RNA-binding protein 7 (266 aa).

Gly-2 is subject to N-acetylglycine. Positions 10–87 constitute an RRM domain; the sequence is RTLFVGNLET…RPIKIQFRSG (78 aa). ZCCHC8 binding stretches follow at residues 25–35 and 59–76; these read LLFELFHQAGP and HEVS…IKLY. Polar residues predominate over residues 90 to 115; that stretch reads HAPQDVSLSYPQHHVGNSSPTSTSPS. A disordered region spans residues 90–118; that stretch reads HAPQDVSLSYPQHHVGNSSPTSTSPSRYE. Phosphoserine is present on residues Ser-136 and Ser-137. At Arg-152 the chain carries Omega-N-methylarginine. The interval 162 to 266 is disordered; the sequence is SSPLDQSGFS…RDGKWRSSRH (105 aa). Over residues 173–188 the composition is skewed to low complexity; it reads SVQSHSHSFNQSSSSQ. Ser-204 carries the phosphoserine modification. The segment covering 209–266 has biased composition (basic and acidic residues); it reads ADRHYSREQRYTDHGSDHHYRGKRDDFFYEDRNHDDWSHDYDNRRDSSRDGKWRSSRH.

As to quaternary structure, component of the nuclear exosome targeting (NEXT) complex composed of MTREX, ZCCHC8, and RBM7 that directs a subset of non-coding short-lived RNAs for exosomal degradation. Interacts with ZCCHC8 and SF3B2/SAP145. Binds to MTREX through ZCCHC8. Interacts with YWHAE and YWHAZ; these interactions are stress-dependent and RBM7 phosphorylation dependent; release RNA from the NEXT complex and may affect RNA targeting to the nuclear RNA exosomome for degradation. Interacts with MEPCE and LARP7, the core subunits of 7SK snRNP; upon genotoxic stress this interaction is enhanced, triggering the release of inactive P-TEFb complex from the core and P-TEFb complex activation. Phosphorylated at Ser-136 by MAPK14/p38-alpha-activated MAPKAPK2/MK2; this phosphorylation is stress-dependent; this phosphorylation decreases its RNA-binding capacity therefore affecting RNA nuclear exosome-mediated degradation. This phosphorylation mediates YWHAE and YWHAZ interactions. In terms of tissue distribution, ubiquitous.

It is found in the nucleus. Its subcellular location is the nucleoplasm. In terms of biological role, RNA-binding subunit of the trimeric nuclear exosome targeting (NEXT) complex, a complex that functions as an RNA exosome cofactor that directs a subset of non-coding short-lived RNAs for exosomal degradation. NEXT is involved in surveillance and turnover of aberrant transcripts and non-coding RNAs. Binds preferentially polyuridine sequences and associates with newly synthesized RNAs, including pre-mRNAs and short-lived exosome substrates such as promoter upstream transcripts (PROMPTs), enhancer RNAs (eRNAs), and 3'-extended products from small nuclear RNAs (snRNAs). Participates in several biological processes including DNA damage response (DDR) and stress response. During stress response, activation of the p38MAPK-MK2 pathway decreases RBM7-RNA-binding and subsequently the RNA exosome degradation activities, thereby modulating the turnover of non-coding transcriptome. Participates in DNA damage response (DDR), through its interaction with MEPCE and LARP7, the core subunits of 7SK snRNP complex, that release the positive transcription elongation factor b (P-TEFb) complex from the 7SK snRNP. In turn, activation of P-TEFb complex induces the transcription of P-TEFb-dependent DDR genes to promote cell viability. The chain is RNA-binding protein 7 from Homo sapiens (Human).